A 357-amino-acid chain; its full sequence is NADH-quinone oxidoreductase subunit H (357 aa).

The next 8 membrane-spanning stretches (helical) occupy residues 26–46 (LVKIIAVVAPLMGAVAYLTLW), 92–112 (ALFVIAPIMTIMPALAAWAVI), 127–147 (LLFVMAITSLEVYGVIVAGWA), 164–184 (MISYEIAMGFVLVIILMVTGS), 203–223 (GLTFLSWNWLPLLPMFFIYII), 259–279 (FFLAEYANMWLISIMATLMFL), 294–314 (VPGWIWLGLKTLMVVTMFIWF), and 329–349 (LGWKVFIPLTLVYLLIVAIWM).

Belongs to the complex I subunit 1 family. In terms of assembly, NDH-1 is composed of 14 different subunits. Subunits NuoA, H, J, K, L, M, N constitute the membrane sector of the complex.

It is found in the cell inner membrane. It carries out the reaction a quinone + NADH + 5 H(+)(in) = a quinol + NAD(+) + 4 H(+)(out). Functionally, NDH-1 shuttles electrons from NADH, via FMN and iron-sulfur (Fe-S) centers, to quinones in the respiratory chain. The immediate electron acceptor for the enzyme in this species is believed to be ubiquinone. Couples the redox reaction to proton translocation (for every two electrons transferred, four hydrogen ions are translocated across the cytoplasmic membrane), and thus conserves the redox energy in a proton gradient. This subunit may bind ubiquinone. The sequence is that of NADH-quinone oxidoreductase subunit H from Janthinobacterium sp. (strain Marseille) (Minibacterium massiliensis).